Reading from the N-terminus, the 599-residue chain is DNA primase (599 aa).

Residues 38–62 (CPFHDEKTPSFTVSEDKQICHCFGC) form a CHC2-type zinc finger. Positions 260–341 (DEIVLLEGFM…NVFVIQLPSG (82 aa)) constitute a Toprim domain. Mg(2+) is bound by residues Glu266, Asp310, and Asp312.

Belongs to the DnaG primase family. As to quaternary structure, monomer. Interacts with DnaB. It depends on Zn(2+) as a cofactor. The cofactor is Mg(2+).

The enzyme catalyses ssDNA + n NTP = ssDNA/pppN(pN)n-1 hybrid + (n-1) diphosphate.. In terms of biological role, RNA polymerase that catalyzes the synthesis of short RNA molecules used as primers for DNA polymerase during DNA replication. The chain is DNA primase from Staphylococcus aureus (strain MRSA252).